The primary structure comprises 156 residues: Small ribosomal subunit protein uS7 (156 aa).

Belongs to the universal ribosomal protein uS7 family. In terms of assembly, part of the 30S ribosomal subunit. Contacts proteins S9 and S11.

In terms of biological role, one of the primary rRNA binding proteins, it binds directly to 16S rRNA where it nucleates assembly of the head domain of the 30S subunit. Is located at the subunit interface close to the decoding center, probably blocks exit of the E-site tRNA. The chain is Small ribosomal subunit protein uS7 from Methylorubrum populi (strain ATCC BAA-705 / NCIMB 13946 / BJ001) (Methylobacterium populi).